We begin with the raw amino-acid sequence, 215 residues long: Probable ribosome-binding factor A, chloroplastic (215 aa).

The transit peptide at 1 to 52 (MPNLLHTNQSHFFFLHHPPIYTVSSKTQAFHFPQSMAPVNLRTNLSVRRTVR) directs the protein to the chloroplast. Over residues 183–192 (KGSGEGKTEP) the composition is skewed to basic and acidic residues. A disordered region spans residues 183–210 (KGSGEGKTEPSDSTEDDQDWEVDDPDED). Acidic residues predominate over residues 194 to 210 (DSTEDDQDWEVDDPDED).

The protein belongs to the RbfA family.

The protein resides in the plastid. Its subcellular location is the chloroplast. In Arabidopsis thaliana (Mouse-ear cress), this protein is Probable ribosome-binding factor A, chloroplastic.